The chain runs to 300 residues: Ribosomal protein bS6--L-glutamate ligase (300 aa).

An ATP-grasp domain is found at 104 to 287; it reads MQLLARQGID…IAGKMIRWIE (184 aa). ATP is bound by residues Lys-141, 178-179, Asp-187, and 211-213; these read EY and RSN. Mg(2+) contacts are provided by Asp-248, Glu-260, and Asn-262. Mn(2+) contacts are provided by Asp-248, Glu-260, and Asn-262.

The protein belongs to the RimK family. The cofactor is Mg(2+). Mn(2+) is required as a cofactor.

Functionally, an L-glutamate ligase that catalyzes the ATP-dependent post-translational addition of glutamate residues to the C-terminus of ribosomal protein bS6 (RpsF). Is also able to catalyze the synthesis of poly-alpha-glutamate in vitro, via ATP hydrolysis from unprotected glutamate as substrate. The number of glutamate residues added to either RpsF or to poly-alpha-glutamate changes with pH. This Shigella boydii serotype 4 (strain Sb227) protein is Ribosomal protein bS6--L-glutamate ligase.